The primary structure comprises 288 residues: Phosphatidylglycerol--prolipoprotein diacylglyceryl transferase (288 aa).

4 helical membrane passes run 8–28, 49–69, 79–99, and 109–129; these read IGPIELHYYGLMYAIAFFVGI, AFVAIISGLIGGRLYYILFNL, ILAVWHGGMAIHGGILGGIAG, and INPLILGDFAAGPFILGQAIG. Residue Arg-130 coordinates a 1,2-diacyl-sn-glycero-3-phospho-(1'-sn-glycerol). A run of 3 helical transmembrane segments spans residues 203-223, 232-252, and 259-279; these read PAMLYELILNLIGFFIIWFIL, GYMWWWYIIIYSINRIIVSFF, and FFNFRAPHVISIILIAVSIFF.

Belongs to the Lgt family.

It localises to the cell inner membrane. It carries out the reaction L-cysteinyl-[prolipoprotein] + a 1,2-diacyl-sn-glycero-3-phospho-(1'-sn-glycerol) = an S-1,2-diacyl-sn-glyceryl-L-cysteinyl-[prolipoprotein] + sn-glycerol 1-phosphate + H(+). The protein operates within protein modification; lipoprotein biosynthesis (diacylglyceryl transfer). Catalyzes the transfer of the diacylglyceryl group from phosphatidylglycerol to the sulfhydryl group of the N-terminal cysteine of a prolipoprotein, the first step in the formation of mature lipoproteins. The protein is Phosphatidylglycerol--prolipoprotein diacylglyceryl transferase of Fusobacterium nucleatum subsp. nucleatum (strain ATCC 25586 / DSM 15643 / BCRC 10681 / CIP 101130 / JCM 8532 / KCTC 2640 / LMG 13131 / VPI 4355).